Here is a 72-residue protein sequence, read N- to C-terminus: uncharacterized protein (72 aa).

Residues 51-72 (AKGGRQRGETVVVDDQCKEHKE) form a disordered region.

The protein belongs to the YiiE family.

This is an uncharacterized protein from Escherichia coli O6:K15:H31 (strain 536 / UPEC).